Here is a 245-residue protein sequence, read N- to C-terminus: NAD(P)H-hydrate epimerase (245 aa).

A YjeF N-terminal domain is found at 21-221 (MREIDRLAVQ…DLGIPPAVYT (201 aa)). 72–76 (GNGGG) provides a ligand contact to (6S)-NADPHX. K(+) is bound by residues asparagine 73 and aspartate 135. (6S)-NADPHX is bound by residues 139–145 (GYSLLGA) and aspartate 168. Serine 171 is a K(+) binding site.

Belongs to the NnrE/AIBP family. K(+) serves as cofactor.

The catalysed reaction is (6R)-NADHX = (6S)-NADHX. The enzyme catalyses (6R)-NADPHX = (6S)-NADPHX. Catalyzes the epimerization of the S- and R-forms of NAD(P)HX, a damaged form of NAD(P)H that is a result of enzymatic or heat-dependent hydration. This is a prerequisite for the S-specific NAD(P)H-hydrate dehydratase to allow the repair of both epimers of NAD(P)HX. This is NAD(P)H-hydrate epimerase from Dehalogenimonas lykanthroporepellens (strain ATCC BAA-1523 / JCM 15061 / BL-DC-9).